A 141-amino-acid polypeptide reads, in one-letter code: Putative pre-16S rRNA nuclease (141 aa).

Belongs to the YqgF nuclease family.

It localises to the cytoplasm. In terms of biological role, could be a nuclease involved in processing of the 5'-end of pre-16S rRNA. In Coxiella burnetii (strain CbuK_Q154) (Coxiella burnetii (strain Q154)), this protein is Putative pre-16S rRNA nuclease.